The sequence spans 144 residues: Alpha-crystallin (144 aa).

Positions 33–143 constitute a sHSP domain; it reads PTFDTRLMRL…TEKHIQIRST (111 aa).

It belongs to the small heat shock protein (HSP20) family.

It is found in the secreted. The protein localises to the cell wall. It localises to the cytoplasm. In terms of biological role, acts as a chaperone. The chain is Alpha-crystallin (hspX) from Mycobacterium bovis (strain ATCC BAA-935 / AF2122/97).